Reading from the N-terminus, the 374-residue chain is Cathepsin W (374 aa).

Residues 1 to 21 (MAITVYLSCLLVLSMAGLAQG) form the signal peptide. The propeptide occupies 22–127 (IKSSLRSQDP…EVGSEEWGES (106 aa)). 2 cysteine pairs are disulfide-bonded: Cys-150–Cys-191 and Cys-184–Cys-226. Cys-153 is a catalytic residue. Asn-205 carries an N-linked (GlcNAc...) asparagine glycan. Active-site residues include His-291 and Asn-329. An N-linked (GlcNAc...) asparagine glycan is attached at Asn-347.

This sequence belongs to the peptidase C1 family.

The protein localises to the endoplasmic reticulum. In terms of biological role, may have a specific function in the mechanism or regulation of T-cell cytolytic activity. The chain is Cathepsin W (CTSW) from Felis catus (Cat).